The sequence spans 385 residues: A-type ATP synthase subunit C (385 aa).

This sequence belongs to the V-ATPase V0D/AC39 subunit family. As to quaternary structure, has multiple subunits with at least A(3), B(3), C, D, E, F, H, I and proteolipid K(x).

Its subcellular location is the cell membrane. Its function is as follows. Component of the A-type ATP synthase that produces ATP from ADP in the presence of a proton gradient across the membrane. In Methanosphaera stadtmanae (strain ATCC 43021 / DSM 3091 / JCM 11832 / MCB-3), this protein is A-type ATP synthase subunit C.